Consider the following 317-residue polypeptide: Melanocyte-stimulating hormone receptor (317 aa).

The Extracellular portion of the chain corresponds to 1–37; the sequence is MPLQGPQRRLLGSLNSTLPATPYLGLTTNQTEPPCLE. A glycan (N-linked (GlcNAc...) asparagine) is linked at Asn-29. The chain crosses the membrane as a helical span at residues 38–63; it reads VSIPDGLFLSLGLVSLVENVLVVTAI. At 64 to 72 the chain is on the cytoplasmic side; that stretch reads AKNRNLHSP. Residues 73–93 traverse the membrane as a helical segment; the sequence is MYYFICCLAVSDLLVSMSNVL. Residues 94–118 lie on the Extracellular side of the membrane; that stretch reads EMAILLLLEAGVLATQASVLQQLDN. A helical membrane pass occupies residues 119–140; it reads IIDVLICGSMVSSLCFLGSIAV. Residues 141–163 are Cytoplasmic-facing; sequence DRYISIFYALRYHSIMMLPRVWR. The chain crosses the membrane as a helical span at residues 164–183; it reads AIVAIWVVSVLSSTLFIAYY. Residues 184–191 lie on the Extracellular side of the membrane; sequence NHTAVLLC. Residues 192 to 211 traverse the membrane as a helical segment; that stretch reads LVTFFVAMLVLMAVLYVHML. Residues 212 to 240 lie on the Cytoplasmic side of the membrane; that stretch reads ARACQHARGIARLHKRQHPIHQGFGLKGA. Residues 241-266 traverse the membrane as a helical segment; that stretch reads ATLTILLGVFFLCWGPFFLHLSLLIL. Residues 267-279 lie on the Extracellular side of the membrane; the sequence is CPQHPTCGCVFKN. A helical membrane pass occupies residues 280–300; it reads FKLFLTLILCSAIVDPLIYAF. Topologically, residues 301 to 317 are cytoplasmic; that stretch reads RSQELRKTLQEVLLCSW. Cys-315 carries S-palmitoyl cysteine lipidation.

The protein belongs to the G-protein coupled receptor 1 family. As to quaternary structure, interacts with MGRN1, but does not undergo MGRN1-mediated ubiquitination; this interaction competes with GNAS-binding and thus inhibits agonist-induced cAMP production. Interacts with OPN3; the interaction results in a decrease in MC1R-mediated cAMP signaling and ultimately a decrease in melanin production in melanocytes.

Its subcellular location is the cell membrane. Receptor for MSH (alpha, beta and gamma) and ACTH. The activity of this receptor is mediated by G proteins which activate adenylate cyclase. Mediates melanogenesis, the production of eumelanin (black/brown) and phaeomelanin (red/yellow), via regulation of cAMP signaling in melanocytes. In Equus caballus (Horse), this protein is Melanocyte-stimulating hormone receptor (MC1R).